The sequence spans 333 residues: Starch-binding domain-containing protein 1 (333 aa).

The Extracellular portion of the chain corresponds to 1-6; the sequence is MGAVWS. Residues 7–23 traverse the membrane as a helical segment; sequence ALLVGGGLAGALILWLL. At 24–333 the chain is on the cytoplasmic side; the sequence is RGDSGAPGKD…KVVHGWWGIH (310 aa). Disordered regions lie at residues 31–73 and 106–139; these read GKDG…ELVS and NARE…RVGE. Positions 50–61 are enriched in gly residues; it reads PGGGPGGGGSGG. Ser67 bears the Phosphoserine mark. Over residues 124–134 the composition is skewed to polar residues; the sequence is NSETSRNQSPE. 2 positions are modified to phosphoserine: Ser135 and Ser162. The LIR signature appears at 181–187; the sequence is HEDWEVV. Residues Ser191, Ser192, Ser201, Ser205, Ser208, Ser216, and Ser219 each carry the phosphoserine modification. The region spanning 233-332 is the CBM20 domain; the sequence is SVKPRQVSIQ…DKVVHGWWGI (100 aa).

Interacts with the ATG8 family proteins GABARAP and GABARAPL1. Interacts with several glycogen-associated proteins, such as GYS2 (liver glycogen synthase), GDE (glycogen debranching enzyme), GBE1 (glycogen branching enzyme 1) and EPM2A (Laforin). Post-translationally, ubiquitinated, which leads to proteasomal degradation.

It localises to the preautophagosomal structure membrane. Its subcellular location is the endoplasmic reticulum membrane. It is found in the cell membrane. The protein localises to the sarcolemma. The protein resides in the T-tubule. Acts as a cargo receptor for glycogen. Delivers its cargo to an autophagic pathway called glycophagy, resulting in the transport of glycogen to lysosomes. This chain is Starch-binding domain-containing protein 1, found in Rattus norvegicus (Rat).